A 397-amino-acid polypeptide reads, in one-letter code: Urea transporter 2 (397 aa).

Transmembrane regions (helical) follow at residues 68 to 85, 92 to 109, 115 to 135, 143 to 163, and 172 to 192; these read VMFV…IGLF, AIAG…ALIL, AIAS…IAVF, WWLL…SSAL, and LPVF…ATGH. N210 carries N-linked (GlcNAc...) asparagine glycosylation. Transmembrane regions (helical) follow at residues 239-257, 264-280, 287-303, 309-329, and 331-351; these read WTGG…LICL, TMGM…FDSI, FNST…FYVI, LLAV…TNVL, and VFGL…FLLL.

It belongs to the urea transporter family. Kidney.

It localises to the apical cell membrane. The protein resides in the basolateral cell membrane. The catalysed reaction is urea(in) = urea(out). Inhibited by urea analogs and phloretin. Functionally, mediates the transport of urea driven by a concentration gradient across the cell membrane of the renal inner medullary collecting duct which is critical to the urinary concentrating mechanism. The polypeptide is Urea transporter 2 (SLC14A2) (Oryctolagus cuniculus (Rabbit)).